Reading from the N-terminus, the 561-residue chain is Cloacin (561 aa).

Composition is skewed to gly residues over residues 1–21 (MSGG…GGQA), 29–40 (SGKGGPSSGGGT), and 66–91 (FGNG…GGGQ). 5 disordered regions span residues 1–93 (MSGG…GQSS), 254–273 (PKGI…TAGG), 304–326 (VKQR…PEEG), 432–507 (KAAL…KRAR), and 530–561 (RASD…KKYL). Residues 1-180 (MSGGDGRGPG…DTVTETPAST (180 aa)) form an involved in the translocation of the protein across the cell membrane region. The responsible for the receptor binding activity stretch occupies residues 200 to 420 (DERQHIAVVA…NAKLKAAQAS (221 aa)). 2 stretches are compositionally biased toward basic and acidic residues: residues 306-326 (QRQE…PEEG) and 440-494 (ESRK…EGKP). The segment at 421-561 (LNAMNDALSR…DPKRNIKKYL (141 aa)) is ribonuclease activity. The segment at 540–561 (FDPKTGKQVKGPDPKRNIKKYL) is binding of immunity protein.

Belongs to the cloacin colicin family.

In terms of biological role, inactivates ribosomes by hydrolyzing 16S RNA in 30S ribosomes at a specific site. Its function is as follows. Colicins are polypeptide toxins produced by and active against E.coli and closely related bacteria. The chain is Cloacin (ccl) from Escherichia coli.